Here is a 417-residue protein sequence, read N- to C-terminus: Phosphoglycerate kinase (417 aa).

Residues valine 23, aspartate 24, phenylalanine 25, asparagine 26, glutamine 39, arginine 40, serine 63, histidine 64, glycine 66, arginine 67, leucine 122, arginine 123, histidine 170, and arginine 171 each coordinate (2R)-3-phosphoglycerate. Glycine 214 contacts ADP. A CDP-binding site is contributed by glycine 214. AMP-binding residues include alanine 215 and lysine 216. Position 215 (alanine 215) interacts with ATP. Alanine 215 is a Mg(2+) binding site. Position 219 (aspartate 219) interacts with CDP. Residue aspartate 219 coordinates Mg(2+). Lysine 220 serves as a coordination point for AMP. Lysine 220 is a binding site for ATP. Glycine 238 provides a ligand contact to ADP. Glycine 238 provides a ligand contact to CDP. Residues glycine 239 and glycine 313 each contribute to the AMP site. Residues glycine 239 and glycine 313 each coordinate ATP. CDP-binding residues include glycine 338, alanine 340, and phenylalanine 343. Phenylalanine 343 is a binding site for ADP. Glutamate 344 is a binding site for AMP. The ATP site is built by glutamate 344, aspartate 375, and threonine 376. Aspartate 375 serves as a coordination point for Mg(2+).

This sequence belongs to the phosphoglycerate kinase family. In terms of assembly, monomer. Requires Mg(2+) as cofactor.

It is found in the cytoplasm. It localises to the mitochondrion. The enzyme catalyses (2R)-3-phosphoglycerate + ATP = (2R)-3-phospho-glyceroyl phosphate + ADP. The protein operates within carbohydrate degradation; glycolysis; pyruvate from D-glyceraldehyde 3-phosphate: step 2/5. Catalyzes one of the two ATP producing reactions in the glycolytic pathway via the reversible conversion of 1,3-diphosphoglycerate to 3-phosphoglycerate. Both L- and D- forms of purine and pyrimidine nucleotides can be used as substrates, but the activity is much lower on pyrimidines. Negatively regulates the biosynthesis of acetyl-CoA from pyruvate in the mitochondrion. In Hypocrea rufa (Trichoderma viride), this protein is Phosphoglycerate kinase (pgk1).